We begin with the raw amino-acid sequence, 63 residues long: Potassium channel toxin MeuTXKalpha4 (63 aa).

The signal sequence occupies residues 1 to 28 (MSRLLIFILTAVVLSVIIDILNNSKVEG). Disulfide bonds link C35-C53, C39-C59, and C43-C61.

It belongs to the short scorpion toxin superfamily. Potassium channel inhibitor family. As to expression, expressed by the venom gland.

Its subcellular location is the secreted. In terms of biological role, may block voltage-gated potassium channels (Kv). The polypeptide is Potassium channel toxin MeuTXKalpha4 (Mesobuthus eupeus (Lesser Asian scorpion)).